The following is a 40-amino-acid chain: Photosystem II reaction center protein J (40 aa).

A helical transmembrane segment spans residues 8–28 (IPLWLIGTVTGIIVIGLLGIF).

The protein belongs to the PsbJ family. As to quaternary structure, PSII is composed of 1 copy each of membrane proteins PsbA, PsbB, PsbC, PsbD, PsbE, PsbF, PsbH, PsbI, PsbJ, PsbK, PsbL, PsbM, PsbT, PsbX, PsbY, PsbZ, Psb30/Ycf12, at least 3 peripheral proteins of the oxygen-evolving complex and a large number of cofactors. It forms dimeric complexes.

The protein localises to the plastid. Its subcellular location is the chloroplast thylakoid membrane. Functionally, one of the components of the core complex of photosystem II (PSII). PSII is a light-driven water:plastoquinone oxidoreductase that uses light energy to abstract electrons from H(2)O, generating O(2) and a proton gradient subsequently used for ATP formation. It consists of a core antenna complex that captures photons, and an electron transfer chain that converts photonic excitation into a charge separation. The sequence is that of Photosystem II reaction center protein J from Pinus koraiensis (Korean pine).